The primary structure comprises 113 residues: Gas vesicle protein I2 (113 aa).

A disordered region spans residues methionine 1–threonine 93. Positions glutamine 11–glutamine 22 are enriched in low complexity. The span at glutamate 52–alanine 63 shows a compositional bias: polar residues. Over residues alanine 69–alanine 81 the composition is skewed to low complexity. A compositionally biased stretch (polar residues) spans histidine 82–threonine 93.

Belongs to the gas vesicle GvpI family. In terms of assembly, gvpF to GvpM interact with each other in vitro, and may form multi-subunit complex(es). Interacts with GvpC and GvpO.

It is found in the gas vesicle. In terms of biological role, proteins GvpF to GvpM might be involved in nucleating gas vesicle formation. A minor component of the gas vesicle. Gas vesicles are hollow, gas filled proteinaceous nanostructures found in several microbial planktonic microorganisms. They allow positioning of halobacteria at the optimal depth for growth in the poorly aerated, shallow brine pools of their habitat. Expression of 2 c-vac DNA fragments containing 2 divergently transcribed regions (gvpE-gvpF-gvpG-gvpH-gvpI-gvpJ-gvpK-gvpL-gvpM and gvpA-gvpC-gvpN-gvpO) allows H.volcanii to produce gas vesicles. This is Gas vesicle protein I2 from Halobacterium salinarum (strain ATCC 700922 / JCM 11081 / NRC-1) (Halobacterium halobium).